Reading from the N-terminus, the 203-residue chain is Urease accessory protein UreG (203 aa).

14–21 (GPVGSGKT) is a GTP binding site.

It belongs to the SIMIBI class G3E GTPase family. UreG subfamily. Homodimer. UreD, UreF and UreG form a complex that acts as a GTP-hydrolysis-dependent molecular chaperone, activating the urease apoprotein by helping to assemble the nickel containing metallocenter of UreC. The UreE protein probably delivers the nickel.

The protein localises to the cytoplasm. In terms of biological role, facilitates the functional incorporation of the urease nickel metallocenter. This process requires GTP hydrolysis, probably effectuated by UreG. The polypeptide is Urease accessory protein UreG (Allorhizobium ampelinum (strain ATCC BAA-846 / DSM 112012 / S4) (Agrobacterium vitis (strain S4))).